The sequence spans 355 residues: Heavy metal-associated isoprenylated plant protein 7 (355 aa).

The segment covering 1 to 58 (MGEEEKKPEAAEEKKMEEKKPEEKKEGEDKKVDAEKKGEDSDKKPQEGESNKDSKEDS) has biased composition (basic and acidic residues). The interval 1–74 (MGEEEKKPEA…APAPPPPPQE (74 aa)) is disordered. Residues 63-73 (PEAPAPPPPPQ) are compositionally biased toward pro residues. HMA domains are found at residues 72–136 (PQEV…HRQV) and 170–234 (VVTV…KHAA). Residues cysteine 83 and cysteine 86 each contribute to the a metal cation site. Residues 132–157 (THRQVQLLSPIPPPPPPPEKKAEEDK) form a disordered region. A metal cation contacts are provided by cysteine 181 and cysteine 184. The tract at residues 235-308 (IMKIDPPPPP…GGGEEEGKVV (74 aa)) is disordered. Positions 254-293 (EGEKKEEEKGEGESKGEEGKDDKAKTDEEKKEGDGGKGEG) are enriched in basic and acidic residues. Cysteine 352 is subject to Cysteine methyl ester. Cysteine 352 carries S-farnesyl cysteine lipidation. A propeptide spans 353–355 (TVM) (removed in mature form).

It belongs to the HIPP family. Post-translationally, efficiently farnesylated in vitro.

In terms of biological role, heavy-metal-binding protein. Binds zinc, copper and nickel in a reversible manner. The sequence is that of Heavy metal-associated isoprenylated plant protein 7 from Arabidopsis thaliana (Mouse-ear cress).